The primary structure comprises 101 residues: Large ribosomal subunit protein uL24 (101 aa).

This sequence belongs to the universal ribosomal protein uL24 family. As to quaternary structure, part of the 50S ribosomal subunit.

One of two assembly initiator proteins, it binds directly to the 5'-end of the 23S rRNA, where it nucleates assembly of the 50S subunit. In terms of biological role, one of the proteins that surrounds the polypeptide exit tunnel on the outside of the subunit. This is Large ribosomal subunit protein uL24 from Lactococcus lactis subsp. lactis (strain IL1403) (Streptococcus lactis).